The chain runs to 80 residues: Translation initiation factor IF-1, chloroplastic (80 aa).

The 72-residue stretch at 1-72 (MKKQNLIDME…TKGRIIYRLR (72 aa)) folds into the S1-like domain.

The protein belongs to the IF-1 family. As to quaternary structure, component of the 30S ribosomal translation pre-initiation complex which assembles on the 30S ribosome in the order IF-2 and IF-3, IF-1 and N-formylmethionyl-tRNA(fMet); mRNA recruitment can occur at any time during PIC assembly.

It localises to the plastid. The protein resides in the chloroplast. Functionally, one of the essential components for the initiation of protein synthesis. Stabilizes the binding of IF-2 and IF-3 on the 30S subunit to which N-formylmethionyl-tRNA(fMet) subsequently binds. Helps modulate mRNA selection, yielding the 30S pre-initiation complex (PIC). Upon addition of the 50S ribosomal subunit IF-1, IF-2 and IF-3 are released leaving the mature 70S translation initiation complex. This chain is Translation initiation factor IF-1, chloroplastic, found in Adiantum capillus-veneris (Maidenhair fern).